The sequence spans 173 residues: MAIILGIDPGSRVTGYGVIRQQGRQLIYLGSGCIRTQVPDLPSRLKRIYAGVSEIITQFSPDVFSVEQVFMAKNADSALKLGQARGVAILAAVNNDLPVFEYAARQVKQSVVGTGGADKSQVQHMVRSILKLSAAPQADAADALAIAITHCHFNQNLLRVGDPRLVLTRGRLR.

Active-site residues include aspartate 8, glutamate 67, and aspartate 139. The Mg(2+) site is built by aspartate 8, glutamate 67, and aspartate 139.

The protein belongs to the RuvC family. Homodimer which binds Holliday junction (HJ) DNA. The HJ becomes 2-fold symmetrical on binding to RuvC with unstacked arms; it has a different conformation from HJ DNA in complex with RuvA. In the full resolvosome a probable DNA-RuvA(4)-RuvB(12)-RuvC(2) complex forms which resolves the HJ. Mg(2+) serves as cofactor.

The protein resides in the cytoplasm. It carries out the reaction Endonucleolytic cleavage at a junction such as a reciprocal single-stranded crossover between two homologous DNA duplexes (Holliday junction).. The RuvA-RuvB-RuvC complex processes Holliday junction (HJ) DNA during genetic recombination and DNA repair. Endonuclease that resolves HJ intermediates. Cleaves cruciform DNA by making single-stranded nicks across the HJ at symmetrical positions within the homologous arms, yielding a 5'-phosphate and a 3'-hydroxyl group; requires a central core of homology in the junction. The consensus cleavage sequence is 5'-(A/T)TT(C/G)-3'. Cleavage occurs on the 3'-side of the TT dinucleotide at the point of strand exchange. HJ branch migration catalyzed by RuvA-RuvB allows RuvC to scan DNA until it finds its consensus sequence, where it cleaves and resolves the cruciform DNA. The chain is Crossover junction endodeoxyribonuclease RuvC from Proteus mirabilis (strain HI4320).